The following is a 452-amino-acid chain: UPF0210 protein CHY_1509 (452 aa).

It belongs to the UPF0210 family. As to quaternary structure, homodimer.

In Carboxydothermus hydrogenoformans (strain ATCC BAA-161 / DSM 6008 / Z-2901), this protein is UPF0210 protein CHY_1509.